The primary structure comprises 233 residues: Type IV secretion system protein PtlE homolog (233 aa).

Residues 42 to 62 (VAWAALAVTALSLIAIATMLP) form a helical membrane-spanning segment.

The protein belongs to the virB8 family.

Its subcellular location is the cell inner membrane. This chain is Type IV secretion system protein PtlE homolog (ptlE), found in Bordetella bronchiseptica (strain ATCC BAA-588 / NCTC 13252 / RB50) (Alcaligenes bronchisepticus).